The chain runs to 319 residues: DNA-directed RNA polymerases IV and V subunit 3B (319 aa).

At Met-1 the chain carries N-acetylmethionine.

The protein belongs to the archaeal Rpo3/eukaryotic RPB3 RNA polymerase subunit family. In terms of assembly, component of the RNA polymerase IV and V complexes. Interacts with NRPB11, SHH1, GRP23 and NRPD1.

It is found in the nucleus. DNA-dependent RNA polymerase catalyzes the transcription of DNA into RNA using the four ribonucleoside triphosphates as substrates. Component of RNA polymerases IV and V which mediate short-interfering RNAs (siRNA) accumulation and subsequent RNA-directed DNA methylation-dependent (RdDM) transcriptional gene silencing (TGS) of endogenous repeated sequences, including transposable elements. The sequence is that of DNA-directed RNA polymerases IV and V subunit 3B (NRPD3B) from Arabidopsis thaliana (Mouse-ear cress).